The primary structure comprises 212 residues: Large ribosomal subunit protein uL3 (212 aa).

An N5-methylglutamine modification is found at Q153.

It belongs to the universal ribosomal protein uL3 family. In terms of assembly, part of the 50S ribosomal subunit. Forms a cluster with proteins L14 and L19. Methylated by PrmB.

One of the primary rRNA binding proteins, it binds directly near the 3'-end of the 23S rRNA, where it nucleates assembly of the 50S subunit. The sequence is that of Large ribosomal subunit protein uL3 from Shewanella loihica (strain ATCC BAA-1088 / PV-4).